A 120-amino-acid chain; its full sequence is Large ribosomal subunit protein uL18 (120 aa).

This sequence belongs to the universal ribosomal protein uL18 family. As to quaternary structure, part of the 50S ribosomal subunit; part of the 5S rRNA/L5/L18/L25 subcomplex. Contacts the 5S and 23S rRNAs.

This is one of the proteins that bind and probably mediate the attachment of the 5S RNA into the large ribosomal subunit, where it forms part of the central protuberance. This chain is Large ribosomal subunit protein uL18, found in Bacillus cereus (strain ATCC 10987 / NRS 248).